The chain runs to 262 residues: Indole-3-glycerol phosphate synthase (262 aa).

This sequence belongs to the TrpC family.

The catalysed reaction is 1-(2-carboxyphenylamino)-1-deoxy-D-ribulose 5-phosphate + H(+) = (1S,2R)-1-C-(indol-3-yl)glycerol 3-phosphate + CO2 + H2O. The protein operates within amino-acid biosynthesis; L-tryptophan biosynthesis; L-tryptophan from chorismate: step 4/5. The chain is Indole-3-glycerol phosphate synthase from Clostridium kluyveri (strain NBRC 12016).